A 293-amino-acid chain; its full sequence is Caspase-6 (293 aa).

The tract at residues 1 to 20 is disordered; that stretch reads MSSEPPPRRARGPGEEQNMT. Residues 1-23 constitute a propeptide that is removed on maturation; the sequence is MSSEPPPRRARGPGEEQNMTEID. The tract at residues 42–44 is tri-arginine exosite; sequence KRR. Serine 79 is subject to Phosphoserine. Histidine 121 is an active-site residue. The interval 125 to 142 is 130's region; that stretch reads NHIYAYDAKIEIQTLTGL. The active site involves cysteine 163. Residues 180–193 constitute a propeptide that is removed on maturation; sequence HRTDTPDANLTQVD. A Phosphoserine modification is found at serine 257. S-palmitoyl cysteine attachment occurs at residues cysteine 264 and cysteine 277.

It belongs to the peptidase C14A family. In terms of assembly, heterotetramer that consists of two anti-parallel arranged heterodimers, each one formed by a 18 kDa (p18) and a 11 kDa (p11) subunits. Interacts with BIRC6/bruce. Interacts with RIPK3. Heterotetramer that consists of two anti-parallel arranged heterodimers, each one formed by a 18 kDa (Caspase-6 subunit p18) and a 11 kDa (Caspase-6 subunit p11) subunit. In terms of processing, phosphorylated by NUAK1; phosphorylation inhibits self-activation. Phosphorylation at Ser-257 by AMP-activated protein kinase (PRKAA1 or PRKAA2) inhibits autocleavage, preventing caspase activation, thereby preventing hepatocyte apoptosis. Post-translationally, palmitoylation by ZDHHC17 blocks dimerization and subsequent activation, leading to inhibit the cysteine protease activity. Can be cleaved and activated by different caspases, depending on the context. Cleaved and activated by caspase-8 (CASP8) and subsequently by caspase-3 (CASP3). Can also undergo autoactivation by mediating autocleavage at Asp-179 and Asp-193, while it is not able to cleave its N-terminal disordered prodomain. Cleaved and activated by CASP1, possibly in the context of inflammation.

The protein resides in the cytoplasm. Its subcellular location is the nucleus. It catalyses the reaction Strict requirement for Asp at position P1 and has a preferred cleavage sequence of Val-Glu-His-Asp-|-.. Its activity is regulated as follows. During activation, the N-terminal disordered prodomain is removed by cleavage. Concomitantly, double cleavage gives rise to a large 18-kDa and a small 11-kDa subunit. The two large and two small subunits then assemble to form the active CASP6 complex. Can be cleaved and activated by different caspases, depending on the context. Cleaved and activated by caspase-8 (CASP8) and subsequently by caspase-3 (CASP3). Can also undergo autoactivation by mediating autocleavage at Asp-179 and Asp-193, while it is not able to cleave its N-terminal disordered prodomain. Intramolecular cleavage at Asp-193 is a prerequisite for CASP6 self-activation. Cleaved and activated by CASP1 in neurons, possibly in the context of inflammation. Phosphorylation at Ser-257 inhibits autocleavage, preventing caspase activation. Functionally, cysteine protease that plays essential roles in programmed cell death, axonal degeneration, development and innate immunity. Acts as a non-canonical executioner caspase during apoptosis: localizes in the nucleus and cleaves the nuclear structural protein NUMA1 and lamin A/LMNA thereby inducing nuclear shrinkage and fragmentation. Lamin-A/LMNA cleavage is required for chromatin condensation and nuclear disassembly during apoptotic execution. Acts as a regulator of liver damage by promoting hepatocyte apoptosis: in absence of phosphorylation by AMP-activated protein kinase (AMPK), catalyzes cleavage of BID, leading to cytochrome c release, thereby participating in nonalcoholic steatohepatitis. Cleaves PARK7/DJ-1 in cells undergoing apoptosis. Involved in intrinsic apoptosis by mediating cleavage of RIPK1. Furthermore, cleaves many transcription factors such as NF-kappa-B and cAMP response element-binding protein/CREBBP. Cleaves phospholipid scramblase proteins XKR4 and XKR9. In addition to apoptosis, involved in different forms of programmed cell death. Plays an essential role in defense against viruses by acting as a central mediator of the ZBP1-mediated pyroptosis, apoptosis, and necroptosis (PANoptosis), independently of its cysteine protease activity. PANoptosis is a unique inflammatory programmed cell death, which provides a molecular scaffold that allows the interactions and activation of machinery required for inflammasome/pyroptosis, apoptosis and necroptosis. Mechanistically, interacts with RIPK3 and enhances the interaction between RIPK3 and ZBP1, leading to ZBP1-mediated inflammasome activation and cell death. Plays an essential role in axon degeneration during axon pruning which is the remodeling of axons during neurogenesis but not apoptosis. Regulates B-cell programs both during early development and after antigen stimulation. The protein is Caspase-6 of Bos taurus (Bovine).